A 174-amino-acid chain; its full sequence is RNA polymerase sigma factor CarQ (174 aa).

Positions 39–52 match the Polymerase core binding motif; sequence DLLQATFLSVIRSR. A disordered region spans residues 86-106; the sequence is YASREDTATPASAAPDDSDPS. Positions 136–155 form a DNA-binding region, H-T-H motif; it reads FEEIGALRGISPGAARLRAH.

The protein belongs to the sigma-70 factor family. ECF subfamily.

Its function is as follows. Sigma factors are initiation factors that promote the attachment of RNA polymerase to specific initiation sites and are then released. This sigma factor regulates genes for the light induced biosynthesis of carotenoids. This Myxococcus xanthus protein is RNA polymerase sigma factor CarQ (carQ).